A 320-amino-acid chain; its full sequence is Fe-S cluster assembly protein dre2 (320 aa).

Residues 1–130 (MAKQTLLLSP…KPDIEEMQAV (130 aa)) are N-terminal SAM-like domain. Residues 131 to 213 (PLRLGRKNDH…DNLLDDSELS (83 aa)) are linker. Residues 141-166 (LAGAPSLEGSAAEHPFPPEVSEGKTA) are disordered. 4 residues coordinate [2Fe-2S] cluster: C222, C233, C236, and C238. The fe-S binding site A stretch occupies residues 222–238 (CRPKAGKRRRACKDCTC). C283, C286, C294, and C297 together coordinate [4Fe-4S] cluster. 2 consecutive short sequence motifs (cx2C motif) follow at residues 283–286 (CGNC) and 294–297 (CEGC). A fe-S binding site B region spans residues 283–297 (CGNCSLGDAFRCEGC).

Belongs to the anamorsin family. Monomer. Interacts with tah18. Interacts with mia40. [2Fe-2S] cluster is required as a cofactor. The cofactor is [4Fe-4S] cluster.

It localises to the cytoplasm. The protein resides in the mitochondrion intermembrane space. Its function is as follows. Component of the cytosolic iron-sulfur (Fe-S) protein assembly (CIA) machinery required for the maturation of extramitochondrial Fe-S proteins. Part of an electron transfer chain functioning in an early step of cytosolic Fe-S biogenesis, facilitating the de novo assembly of a [4Fe-4S] cluster on the scaffold complex cfd1-nbp35. Electrons are transferred to dre2 from NADPH via the FAD- and FMN-containing protein tah18. Tah18-dre2 are also required for the assembly of the diferric tyrosyl radical cofactor of ribonucleotide reductase (RNR), probably by providing electrons for reduction during radical cofactor maturation in the catalytic small subunit rnr2. The sequence is that of Fe-S cluster assembly protein dre2 from Neosartorya fischeri (strain ATCC 1020 / DSM 3700 / CBS 544.65 / FGSC A1164 / JCM 1740 / NRRL 181 / WB 181) (Aspergillus fischerianus).